Here is a 311-residue protein sequence, read N- to C-terminus: Biotin synthase (311 aa).

The Radical SAM core domain maps to 32 to 258 (NGVQFCQLLN…LFPLSRIRLA (227 aa)). Residues cysteine 47, cysteine 51, and cysteine 54 each contribute to the [4Fe-4S] cluster site. 4 residues coordinate [2Fe-2S] cluster: cysteine 91, cysteine 124, cysteine 184, and arginine 256.

This sequence belongs to the radical SAM superfamily. Biotin synthase family. Homodimer. [4Fe-4S] cluster serves as cofactor. Requires [2Fe-2S] cluster as cofactor.

It carries out the reaction (4R,5S)-dethiobiotin + (sulfur carrier)-SH + 2 reduced [2Fe-2S]-[ferredoxin] + 2 S-adenosyl-L-methionine = (sulfur carrier)-H + biotin + 2 5'-deoxyadenosine + 2 L-methionine + 2 oxidized [2Fe-2S]-[ferredoxin]. Its pathway is cofactor biosynthesis; biotin biosynthesis; biotin from 7,8-diaminononanoate: step 2/2. In terms of biological role, catalyzes the conversion of dethiobiotin (DTB) to biotin by the insertion of a sulfur atom into dethiobiotin via a radical-based mechanism. This chain is Biotin synthase, found in Methylacidiphilum infernorum (isolate V4) (Methylokorus infernorum (strain V4)).